We begin with the raw amino-acid sequence, 448 residues long: Hyaluronidase conohyal-Cn1 (448 aa).

Residues 1-18 (MRAVVVVTGLVVVVVATA) form the signal peptide. A propeptide spanning residues 19 to 33 (LSLPNHDVKSATSSR) is cleaved from the precursor. The interval 26–55 (VKSATSSRSSSDYQGSSGDDCDEGLPPPDQ) is disordered. The segment covering 31–43 (SSRSSSDYQGSSG) has biased composition (low complexity). A disulfide bridge links Cys67 with Cys344. N-linked (GlcNAc...) asparagine glycosylation occurs at Asn141. Residue Glu151 is the Proton donor of the active site. Residues Asn169 and Asn361 are each glycosylated (N-linked (GlcNAc...) asparagine). 3 disulfides stabilise this stretch: Cys369–Cys380, Cys374–Cys413, and Cys415–Cys424. An EGF-like domain is found at 413 to 424 (CRCYSAWEGACC).

Belongs to the glycosyl hydrolase 56 family. As to expression, expressed by the venom duct.

It localises to the secreted. It carries out the reaction Random hydrolysis of (1-&gt;4)-linkages between N-acetyl-beta-D-glucosamine and D-glucuronate residues in hyaluronate.. Its function is as follows. Hyaluronidase catalyzes the hydrolysis of hyaluronic acid (HA), an anionic, nonsulfated glycosaminoglycan distributed widely throughout connective, epithelial, and neural tissues. In venom, they are known to enhance diffusion of the venom by degrading the extracellular matrix. The chain is Hyaluronidase conohyal-Cn1 from Conus consors (Singed cone).